The sequence spans 360 residues: MPIMAGTASPWRREAVFLTAMLVVETSVVGISTLFKFATSKGLNIYPFLGYSYLLASLLLLPSLFFTNRSSSLPPLSVSILSKIGLLGFLGSMYVITGYIGIEYSSPTLASAINNITPALTFILAIIFRMEKVSFKERSSLAKLMGTILSLIGALVVIFYHGPRVFLASSPPYVNFRQFSPPLSSSNSDWLIGGALLTMQGIFVSVSFILQAHIMSVYPAAFRVSFLYTVCVSIVTSTIGLVVEKNNPSVWIIHFDITLITIVTMAIVTSVYYVIHSWTVRHKGPLYLAIFKPLSILIAVVMGAIFLNDSLYLGCLIGGILITLGFYAVMWGKANEEKDQLSFSEKEKTPLLLNRKNDQV.

10 consecutive transmembrane segments (helical) span residues A15–F35, I45–F65, I84–Y104, T108–F128, S140–Y160, W190–L210, V224–E244, P248–V268, L286–F306, and L311–W331. The region spanning G30–I158 is the EamA domain.

Belongs to the drug/metabolite transporter (DMT) superfamily. Plant drug/metabolite exporter (P-DME) (TC 2.A.7.4) family.

The protein localises to the membrane. The polypeptide is WAT1-related protein At3g28070 (Arabidopsis thaliana (Mouse-ear cress)).